The chain runs to 110 residues: Large ribosomal subunit protein uL22 (110 aa).

The protein belongs to the universal ribosomal protein uL22 family. As to quaternary structure, part of the 50S ribosomal subunit.

This protein binds specifically to 23S rRNA; its binding is stimulated by other ribosomal proteins, e.g. L4, L17, and L20. It is important during the early stages of 50S assembly. It makes multiple contacts with different domains of the 23S rRNA in the assembled 50S subunit and ribosome. Functionally, the globular domain of the protein is located near the polypeptide exit tunnel on the outside of the subunit, while an extended beta-hairpin is found that lines the wall of the exit tunnel in the center of the 70S ribosome. This Solidesulfovibrio magneticus (strain ATCC 700980 / DSM 13731 / RS-1) (Desulfovibrio magneticus) protein is Large ribosomal subunit protein uL22.